A 126-amino-acid chain; its full sequence is Aspartate 1-decarboxylase (126 aa).

The Schiff-base intermediate with substrate; via pyruvic acid role is filled by Ser25. Ser25 bears the Pyruvic acid (Ser) mark. Thr57 is a substrate binding site. Tyr58 serves as the catalytic Proton donor. Position 73–75 (73–75 (GAA)) interacts with substrate.

This sequence belongs to the PanD family. Heterooctamer of four alpha and four beta subunits. The cofactor is pyruvate. In terms of processing, is synthesized initially as an inactive proenzyme, which is activated by self-cleavage at a specific serine bond to produce a beta-subunit with a hydroxyl group at its C-terminus and an alpha-subunit with a pyruvoyl group at its N-terminus.

The protein resides in the cytoplasm. It catalyses the reaction L-aspartate + H(+) = beta-alanine + CO2. It functions in the pathway cofactor biosynthesis; (R)-pantothenate biosynthesis; beta-alanine from L-aspartate: step 1/1. Catalyzes the pyruvoyl-dependent decarboxylation of aspartate to produce beta-alanine. The sequence is that of Aspartate 1-decarboxylase from Sodalis glossinidius (strain morsitans).